A 131-amino-acid polypeptide reads, in one-letter code: Large ribosomal subunit protein bL19 (131 aa).

Positions M1–P11 are enriched in polar residues. A disordered region spans residues M1 to A20.

This sequence belongs to the bacterial ribosomal protein bL19 family.

This protein is located at the 30S-50S ribosomal subunit interface and may play a role in the structure and function of the aminoacyl-tRNA binding site. The polypeptide is Large ribosomal subunit protein bL19 (Dehalococcoides mccartyi (strain ATCC BAA-2100 / JCM 16839 / KCTC 5957 / BAV1)).